Reading from the N-terminus, the 190-residue chain is Threonylcarbamoyl-AMP synthase (190 aa).

The 182-residue stretch at 9–190 (FLQLALARQT…IDIVTGQQFR (182 aa)) folds into the YrdC-like domain.

Belongs to the SUA5 family. TsaC subfamily.

The protein localises to the cytoplasm. It carries out the reaction L-threonine + hydrogencarbonate + ATP = L-threonylcarbamoyladenylate + diphosphate + H2O. Functionally, required for the formation of a threonylcarbamoyl group on adenosine at position 37 (t(6)A37) in tRNAs that read codons beginning with adenine. Catalyzes the conversion of L-threonine, HCO(3)(-)/CO(2) and ATP to give threonylcarbamoyl-AMP (TC-AMP) as the acyladenylate intermediate, with the release of diphosphate. This is Threonylcarbamoyl-AMP synthase from Marinobacter nauticus (strain ATCC 700491 / DSM 11845 / VT8) (Marinobacter aquaeolei).